A 309-amino-acid polypeptide reads, in one-letter code: HPr kinase/phosphorylase (309 aa).

Active-site residues include His-138 and Lys-159. 153–160 (GQSGVGKS) contacts ATP. Residue Ser-160 participates in Mg(2+) binding. Catalysis depends on Asp-177, which acts as the Proton acceptor; for phosphorylation activity. Proton donor; for dephosphorylation activity. The segment at 201 to 210 (LEIRGLGIIN) is important for the catalytic mechanism of both phosphorylation and dephosphorylation. Glu-202 provides a ligand contact to Mg(2+). Arg-243 is a catalytic residue. The segment at 264 to 269 (PVRPGR) is important for the catalytic mechanism of dephosphorylation.

The protein belongs to the HPrK/P family. Homohexamer. Mg(2+) serves as cofactor.

It carries out the reaction [HPr protein]-L-serine + ATP = [HPr protein]-O-phospho-L-serine + ADP + H(+). The enzyme catalyses [HPr protein]-O-phospho-L-serine + phosphate + H(+) = [HPr protein]-L-serine + diphosphate. Catalyzes the ATP- as well as the pyrophosphate-dependent phosphorylation of a specific serine residue in HPr, a phosphocarrier protein of the phosphoenolpyruvate-dependent sugar phosphotransferase system (PTS). HprK/P also catalyzes the pyrophosphate-producing, inorganic phosphate-dependent dephosphorylation (phosphorolysis) of seryl-phosphorylated HPr (P-Ser-HPr). The two antagonistic activities of HprK/P are regulated by several intracellular metabolites, which change their concentration in response to the absence or presence of rapidly metabolisable carbon sources (glucose, fructose, etc.) in the growth medium. Also phosphorylates/dephosphorylates the HPr-like catabolite repression protein crh on a specific serine residue. Therefore, by controlling the phosphorylation state of HPr and crh, HPrK/P is a sensor enzyme that plays a major role in the regulation of carbon metabolism and sugar transport: it mediates carbon catabolite repression (CCR), and regulates PTS-catalyzed carbohydrate uptake and inducer exclusion. The chain is HPr kinase/phosphorylase from Bacillus cereus (strain AH820).